A 461-amino-acid polypeptide reads, in one-letter code: V-type ATP synthase beta chain (461 aa).

Belongs to the ATPase alpha/beta chains family.

In terms of biological role, produces ATP from ADP in the presence of a proton gradient across the membrane. The V-type beta chain is a regulatory subunit. The protein is V-type ATP synthase beta chain of Clostridium botulinum (strain Langeland / NCTC 10281 / Type F).